The sequence spans 338 residues: P2Y purinoceptor 14 (338 aa).

Topologically, residues 1–29 are extracellular; it reads MINSTSTQPPDESCSQNLLITQQIIPVLY. Asn-3 carries an N-linked (GlcNAc...) asparagine glycan. Residues 30-50 form a helical membrane-spanning segment; it reads CMVFIAGILLNGVSGWIFFYV. Over 51–55 the chain is Cytoplasmic; that stretch reads PSSKS. Residues 56-76 traverse the membrane as a helical segment; that stretch reads FIIYLKNIVIADFVMSLTFPF. The Extracellular segment spans residues 77 to 96; that stretch reads KILGDSGLGPWQLNVFVCRV. A disulfide bond links Cys-94 and Cys-172. The chain crosses the membrane as a helical span at residues 97–117; it reads SAVLFYVNMYVSIVFFGLISF. Over 118–139 the chain is Cytoplasmic; the sequence is DRYYKIVKPLWTSFIQSVSYSK. Residues 140-160 traverse the membrane as a helical segment; it reads LLSVIVWMLMLLLAVPNIILT. N-linked (GlcNAc...) asparagine glycosylation is present at Asn-161. Residues 161 to 188 lie on the Extracellular side of the membrane; sequence NQSVREVTQIKCIELKSELGRKWHKASN. A helical transmembrane segment spans residues 189-209; that stretch reads YIFVAIFWIVFLLLIVFYTAI. Topologically, residues 210–234 are cytoplasmic; sequence TKKIFKSHLKSSRNSTSVKKKSSRN. A helical membrane pass occupies residues 235-255; sequence IFSIVFVFFVCFVPYHIARIP. Residues 256 to 278 lie on the Extracellular side of the membrane; it reads YTKSQTEAHYSCQSKEILRYMKE. Residues 279-299 traverse the membrane as a helical segment; the sequence is FTLLLSAANVCLDPIIYFFLC. The Cytoplasmic segment spans residues 300–338; the sequence is QPFREILCKKLHIPLKAQNDLDISRIKRGNTTLESTDTL.

The protein belongs to the G-protein coupled receptor 1 family. In terms of tissue distribution, highest expression in the placenta, adipose tissue, stomach and intestine, intermediate levels in the brain, spleen, lung and heart, lowest levels in the kidney.

The protein localises to the cell membrane. Its function is as follows. Receptor for UDP-glucose and other UDP-sugar coupled to G-proteins. Not activated by ATP, ADP, UTP or ATP. This Homo sapiens (Human) protein is P2Y purinoceptor 14 (P2RY14).